The sequence spans 101 residues: NADH-quinone oxidoreductase subunit K (101 aa).

3 consecutive transmembrane segments (helical) span residues 4–24, 30–50, and 62–82; these read LGHL…GIFL, IVLL…FIAF, and FVFF…AILV.

This sequence belongs to the complex I subunit 4L family. As to quaternary structure, NDH-1 is composed of 14 different subunits. Subunits NuoA, H, J, K, L, M, N constitute the membrane sector of the complex.

Its subcellular location is the cell inner membrane. The enzyme catalyses a quinone + NADH + 5 H(+)(in) = a quinol + NAD(+) + 4 H(+)(out). Functionally, NDH-1 shuttles electrons from NADH, via FMN and iron-sulfur (Fe-S) centers, to quinones in the respiratory chain. The immediate electron acceptor for the enzyme in this species is believed to be ubiquinone. Couples the redox reaction to proton translocation (for every two electrons transferred, four hydrogen ions are translocated across the cytoplasmic membrane), and thus conserves the redox energy in a proton gradient. This is NADH-quinone oxidoreductase subunit K from Xylella fastidiosa (strain 9a5c).